A 430-amino-acid polypeptide reads, in one-letter code: Probable carboxypeptidase AFLA_037450 (430 aa).

Positions 1–16 (MKSIYSLVLCTALTAA) are cleaved as a signal peptide. The N-linked (GlcNAc...) asparagine glycan is linked to Asn84. Asp156 is a binding site for Zn(2+). The active-site Proton acceptor is the Glu188. Glu189 contributes to the Zn(2+) binding site. Residue Asn285 is glycosylated (N-linked (GlcNAc...) asparagine).

Belongs to the peptidase M20A family. Zn(2+) serves as cofactor.

It localises to the secreted. This Aspergillus flavus (strain ATCC 200026 / FGSC A1120 / IAM 13836 / NRRL 3357 / JCM 12722 / SRRC 167) protein is Probable carboxypeptidase AFLA_037450.